The chain runs to 261 residues: MSKLIPVIKVNNLSFYYDTQKILEGVSMEIYQSKVTAIIGPSGCGKSTFLKCLNRMNELESEVRVEGRVEFFNQNIYERRVNLNRLRRQVSMVHPKPNLFPMSVYDNVAYGVKIVGWRPKLEIDDIVESALKDADLWDEIKHKIHKSALDLSGGQQQRLCIARALAVKPKVLLMDEPCFGLDPIASMKVESLIQSLRLRSELTMVIVSHNLSQVSRVSDFTAFFKGNENRIGQLVEFGLTKKMFNSPHDSRTREYVLSRLG.

The 249-residue stretch at 8 to 256 (IKVNNLSFYY…PHDSRTREYV (249 aa)) folds into the ABC transporter domain. Residue 40 to 47 (GPSGCGKS) coordinates ATP.

This sequence belongs to the ABC transporter superfamily. Phosphate importer (TC 3.A.1.7) family. In terms of assembly, the complex is composed of two ATP-binding proteins (PstB), two transmembrane proteins (PstC and PstA) and a solute-binding protein (PstS).

The protein localises to the cell inner membrane. The catalysed reaction is phosphate(out) + ATP + H2O = ADP + 2 phosphate(in) + H(+). In terms of biological role, part of the ABC transporter complex PstSACB involved in phosphate import. Responsible for energy coupling to the transport system. In Nostoc sp. (strain PCC 7120 / SAG 25.82 / UTEX 2576), this protein is Phosphate import ATP-binding protein PstB 1.